Reading from the N-terminus, the 356-residue chain is D-alanine--D-alanine ligase (356 aa).

Residues 134–339 form the ATP-grasp domain; the sequence is KQLFAHRGLP…YSDLIKKLIE (206 aa). 167–222 lines the ATP pocket; it reads HDKLEYPVFVKPANLGSSVGISKCNNEEELKNGIEEAFQFDRKLVIEQGIEAREIE. The Mg(2+) site is built by Asp293, Glu306, and Asn308.

This sequence belongs to the D-alanine--D-alanine ligase family. It depends on Mg(2+) as a cofactor. Requires Mn(2+) as cofactor.

The protein resides in the cytoplasm. The enzyme catalyses 2 D-alanine + ATP = D-alanyl-D-alanine + ADP + phosphate + H(+). The protein operates within cell wall biogenesis; peptidoglycan biosynthesis. Cell wall formation. This chain is D-alanine--D-alanine ligase, found in Staphylococcus saprophyticus subsp. saprophyticus (strain ATCC 15305 / DSM 20229 / NCIMB 8711 / NCTC 7292 / S-41).